A 151-amino-acid polypeptide reads, in one-letter code: IFN signaling evasion protein OPG029 (151 aa).

Belongs to the orthopoxvirus OPG029 family. Interacts with host TANK, TBKBP1 and AZI2; these interactions prevent interferon production. Interacts with host STAT2.

Its function is as follows. Prevents establishment of cellular antiviral state by blocking virus-induced phosphorylation and activation of interferon regulatory factors 3/IRF3 and 7/IRF7, transcription factors critical for the induction of interferons alpha and beta. This blockage is produced through the inhibition of host TBK1, by binding host TBK1 adapter proteins TBKBP1 and AZI2, thereby producing a strong inhibition of the phosphorylation and activation of IRF3 and IRF7. Also acts as an inhibitor of the cellular response to type I IFN by interacting with host STAT2. Mechanistically, exerts its inhibitory effect after host ISGF3 complex (composed of STAT1, STAT2 and IRF9) binding to the interferon stimulated response element (ISRE). In Homo sapiens (Human), this protein is IFN signaling evasion protein OPG029 (OPG029).